A 154-amino-acid chain; its full sequence is SsrA-binding protein (154 aa).

The interval 134–154 is disordered; it reads ETLRRRDAKREVERALKEKNR.

It belongs to the SmpB family.

Its subcellular location is the cytoplasm. Required for rescue of stalled ribosomes mediated by trans-translation. Binds to transfer-messenger RNA (tmRNA), required for stable association of tmRNA with ribosomes. tmRNA and SmpB together mimic tRNA shape, replacing the anticodon stem-loop with SmpB. tmRNA is encoded by the ssrA gene; the 2 termini fold to resemble tRNA(Ala) and it encodes a 'tag peptide', a short internal open reading frame. During trans-translation Ala-aminoacylated tmRNA acts like a tRNA, entering the A-site of stalled ribosomes, displacing the stalled mRNA. The ribosome then switches to translate the ORF on the tmRNA; the nascent peptide is terminated with the 'tag peptide' encoded by the tmRNA and targeted for degradation. The ribosome is freed to recommence translation, which seems to be the essential function of trans-translation. This Halalkalibacterium halodurans (strain ATCC BAA-125 / DSM 18197 / FERM 7344 / JCM 9153 / C-125) (Bacillus halodurans) protein is SsrA-binding protein.